Consider the following 350-residue polypeptide: RING finger protein 44 (350 aa).

The RING-type; atypical zinc-finger motif lies at 298–339; the sequence is CVVCFSDFEVRQLLRVLPCNHEFHAKCVDKWLKANRTCPICR.

This Rattus norvegicus (Rat) protein is RING finger protein 44 (Rnf44).